A 437-amino-acid polypeptide reads, in one-letter code: Phosphomethylpyrimidine synthase (437 aa).

Substrate contacts are provided by residues Asn-69, Met-98, Tyr-127, His-163, 185–187 (SRG), 226–229 (DACR), and Glu-265. A Zn(2+)-binding site is contributed by His-269. Tyr-292 lines the substrate pocket. A Zn(2+)-binding site is contributed by His-333. [4Fe-4S] cluster contacts are provided by Cys-409, Cys-412, and Cys-416.

The protein belongs to the ThiC family. [4Fe-4S] cluster serves as cofactor.

It carries out the reaction 5-amino-1-(5-phospho-beta-D-ribosyl)imidazole + S-adenosyl-L-methionine = 4-amino-2-methyl-5-(phosphooxymethyl)pyrimidine + CO + 5'-deoxyadenosine + formate + L-methionine + 3 H(+). Its pathway is cofactor biosynthesis; thiamine diphosphate biosynthesis. Catalyzes the synthesis of the hydroxymethylpyrimidine phosphate (HMP-P) moiety of thiamine from aminoimidazole ribotide (AIR) in a radical S-adenosyl-L-methionine (SAM)-dependent reaction. In Clostridium botulinum (strain Okra / Type B1), this protein is Phosphomethylpyrimidine synthase.